A 685-amino-acid chain; its full sequence is MLLPRMLEEVVLAVPARDYDRVVAGLAVEGIFHVDSPPQGVKGEVDRSYRALLTQASERSSRIRQYFDLAGVEPYRVSGVEIEVGGWGESWKRYLEKYSGVEKFYSGLLEEYSEAEARLKELLDIEARIAPVAHLDVDIARLYRSGAFDFAVYYGSYSEGLESRVGEIVSRVGGLAAVEASGGSVVVAVAVPKGALSKISPEILRLNLSIYTPPEGVPGSPREAMEYIRGEKARLGRRLVSIQEMASERLGELAEFYTVVTAFENIFKFLVSTLRRGETRIVRGFVDVRDSGRLRSIVDRMTRGSYVLLSLGVRRGGEAPIPSKVDLPQFLKPFSRVVELYGYPEPNEIVPTVFLAITLPLTFALMFPDAGQGLLVLLFSLFYLRRVSRDWAYVIAVMGGASVVSGLLAGEVFGPLVSKMLGLPELWYRLGLETPPYAMPTYAIDHGEEELVPVLVYRALNVSLFMGAFMLSFGTFLGVVNGVIKRDWVGLVESRLPRFLLFASITGPFLVYMDAGEAGSVLRQALLELGGDSIAAKLVLAGSVLGLAWMLLAGPIIYMLEGHSPLAGLANSFLEAYESLLMLVGNIPSFLRIMALALAHSSLMFVIYYLTVMIMQGGILADVVGALLYVGGNLAVAAMEGLLAFAHASRLHFYEWFSKFYSGTGVPYTPIKVEGVRIKIAGQTF.

A run of 7 helical transmembrane segments spans residues 172–192, 348–368, 394–414, 464–484, 538–558, 604–624, and 626–646; these read VGGL…VAVP, EIVP…LMFP, VIAV…EVFG, LFMG…NGVI, LVLA…PIIY, MFVI…ADVV, and ALLY…LAFA.

Belongs to the V-ATPase 116 kDa subunit family. As to quaternary structure, has multiple subunits with at least A(3), B(3), C, D, E, F, H, I and proteolipid K(x).

The protein localises to the cell membrane. Functionally, component of the A-type ATP synthase that produces ATP from ADP in the presence of a proton gradient across the membrane. This chain is A-type ATP synthase subunit I, found in Aeropyrum pernix (strain ATCC 700893 / DSM 11879 / JCM 9820 / NBRC 100138 / K1).